We begin with the raw amino-acid sequence, 41 residues long: Large ribosomal subunit protein bL36 (41 aa).

Belongs to the bacterial ribosomal protein bL36 family.

The sequence is that of Large ribosomal subunit protein bL36 from Rhizobium etli (strain CIAT 652).